Reading from the N-terminus, the 295-residue chain is Glutamate 5-kinase (295 aa).

Lys9 provides a ligand contact to ATP. Substrate-binding residues include Ser49, Asp136, and Asn148. Residues 168 to 169 and 210 to 216 contribute to the ATP site; these read TD and TGGMLTK.

It belongs to the glutamate 5-kinase family.

The protein resides in the cytoplasm. It catalyses the reaction L-glutamate + ATP = L-glutamyl 5-phosphate + ADP. The protein operates within amino-acid biosynthesis; L-proline biosynthesis; L-glutamate 5-semialdehyde from L-glutamate: step 1/2. Catalyzes the transfer of a phosphate group to glutamate to form L-glutamate 5-phosphate. The chain is Glutamate 5-kinase from Neisseria gonorrhoeae (strain NCCP11945).